An 873-amino-acid chain; its full sequence is Alanine--tRNA ligase (873 aa).

Positions 562, 566, 663, and 667 each coordinate Zn(2+).

Belongs to the class-II aminoacyl-tRNA synthetase family. Zn(2+) serves as cofactor.

It is found in the cytoplasm. The catalysed reaction is tRNA(Ala) + L-alanine + ATP = L-alanyl-tRNA(Ala) + AMP + diphosphate. In terms of biological role, catalyzes the attachment of alanine to tRNA(Ala) in a two-step reaction: alanine is first activated by ATP to form Ala-AMP and then transferred to the acceptor end of tRNA(Ala). Also edits incorrectly charged Ser-tRNA(Ala) and Gly-tRNA(Ala) via its editing domain. The sequence is that of Alanine--tRNA ligase from Bordetella avium (strain 197N).